Consider the following 552-residue polypeptide: Glutamine-dependent NAD(+) synthetase (552 aa).

Residues Leu11–Ala253 form the CN hydrolase domain. Glu52 acts as the Proton acceptor; for glutaminase activity in catalysis. Lys119 (for glutaminase activity) is an active-site residue. L-glutamine is bound at residue Tyr125. Cys157 acts as the Nucleophile; for glutaminase activity in catalysis. Positions 183 and 189 each coordinate L-glutamine. The ligase stretch occupies residues Ala275–Gln552. Position 298 to 305 (Gly298 to Ser305) interacts with ATP. Asn381 contributes to the deamido-NAD(+) binding site. Thr405 provides a ligand contact to ATP. The deamido-NAD(+) site is built by Glu410 and Lys522.

This sequence in the C-terminal section; belongs to the NAD synthetase family.

It carries out the reaction deamido-NAD(+) + L-glutamine + ATP + H2O = L-glutamate + AMP + diphosphate + NAD(+) + H(+). It participates in cofactor biosynthesis; NAD(+) biosynthesis; NAD(+) from deamido-NAD(+) (L-Gln route): step 1/1. In terms of biological role, catalyzes the ATP-dependent amidation of deamido-NAD to form NAD. Uses L-glutamine as a nitrogen source. This is Glutamine-dependent NAD(+) synthetase from Xanthomonas campestris pv. campestris (strain 8004).